A 1234-amino-acid chain; its full sequence is DNA-directed RNA polymerase subunit beta (1234 aa).

It belongs to the RNA polymerase beta chain family. In terms of assembly, the RNAP catalytic core consists of 2 alpha, 1 beta, 1 beta' and 1 omega subunit. When a sigma factor is associated with the core the holoenzyme is formed, which can initiate transcription.

It catalyses the reaction RNA(n) + a ribonucleoside 5'-triphosphate = RNA(n+1) + diphosphate. In terms of biological role, DNA-dependent RNA polymerase catalyzes the transcription of DNA into RNA using the four ribonucleoside triphosphates as substrates. The sequence is that of DNA-directed RNA polymerase subunit beta from Clostridium perfringens (strain SM101 / Type A).